The following is a 129-amino-acid chain: Large ribosomal subunit protein bL12 (129 aa).

This sequence belongs to the bacterial ribosomal protein bL12 family. In terms of assembly, homodimer. Part of the ribosomal stalk of the 50S ribosomal subunit. Forms a multimeric L10(L12)X complex, where L10 forms an elongated spine to which 2 to 4 L12 dimers bind in a sequential fashion. Binds GTP-bound translation factors.

Functionally, forms part of the ribosomal stalk which helps the ribosome interact with GTP-bound translation factors. Is thus essential for accurate translation. The polypeptide is Large ribosomal subunit protein bL12 (Synechococcus sp. (strain CC9605)).